Consider the following 184-residue polypeptide: NADH dehydrogenase [ubiquinone] 1 alpha subcomplex assembly factor 3 (184 aa).

This sequence belongs to the NDUFAF3 family. As to quaternary structure, interacts with NDUFAF4, NDUFS2 and NDUFS3.

Its subcellular location is the nucleus. The protein resides in the mitochondrion inner membrane. Its function is as follows. Essential factor for the assembly of mitochondrial NADH:ubiquinone oxidoreductase complex (complex I). This Homo sapiens (Human) protein is NADH dehydrogenase [ubiquinone] 1 alpha subcomplex assembly factor 3 (NDUFAF3).